The chain runs to 323 residues: MNIVILAGGRSAERQVSLVTGKACKRALEDLGHRAKLIDPEEDLPLRLWQERQAGCDFVWIALHGPGGEDGVVQGMLEWLGLPYQGSGPLASALAMDKLVSKQIFRAEGIPTPEWLVWDEAQPLSWAECVARLGSPLVVKPSNSGSTVGISLARDEVSLAQGLALASSVSSRVFLERYIPGKEITLSILSGQVLPAIEIIPAQGDFYDYEAKYAPGGSRHLIPCSLSAAGLARCEAAGLRAYRVLGCEGLARVDLRVDADENPWVLEVNTLPGMTPTSLCPEAAAALGWTFTELVERMLQDALQRAALTRSAPSGSRPSPQPA.

The 199-residue stretch at 102 to 300 (KQIFRAEGIP…FTELVERMLQ (199 aa)) folds into the ATP-grasp domain. 130-185 (VARLGSPLVVKPSNSGSTVGISLARDEVSLAQGLALASSVSSRVFLERYIPGKEIT) contacts ATP. Residues aspartate 254, glutamate 267, and asparagine 269 each coordinate Mg(2+).

Belongs to the D-alanine--D-alanine ligase family. The cofactor is Mg(2+). Mn(2+) is required as a cofactor.

The protein resides in the cytoplasm. The catalysed reaction is 2 D-alanine + ATP = D-alanyl-D-alanine + ADP + phosphate + H(+). The protein operates within cell wall biogenesis; peptidoglycan biosynthesis. Functionally, cell wall formation. The polypeptide is D-alanine--D-alanine ligase (Synechococcus sp. (strain JA-3-3Ab) (Cyanobacteria bacterium Yellowstone A-Prime)).